Here is a 548-residue protein sequence, read N- to C-terminus: MAMKIPKSGYNRFMKEGAQHFKGTDEAVQRNIEACTELASQIRSAYGPNGMNKMVINHIEKLFVTNDAATILKELEIQHPAAKIIIMATEMQEKQIGDNTNTVVILAAALLEHASNLINMGMTPQEVAAGYEQAAEKALEILPSLVVKEASDMKNIEEVRQYLRSAITSKQYDNEDVIADLVAKACVTTCPANSYNFNVDNIRICKIIGSGVHTSKVMNGMVFKRGAEGEIRSAQDARIAVYTCPFDLTQTETKGTVLIENADELVNFSKGEESEVEEQVKAIADNGVKVVVAAGKFGDLYLHFLNKYKIMAVRLTSKFDLRRLCRTVGAQPQARICAPAVNLLGHCDSVSVTEIGDENVVVFDKNSETGKVATIIIRGSSQSRIDDVERAVDDAVNTYKALTKDGKLLAGAGAVEIELAKEIESYGAKAPGLEQYAIKKFAHALETLPKAIAENAGMPTTETLTKLYAEHVNGKKNAGIDVWKREVMDAVAHNIFDLYAGKRLAIKLATDAAATILKVDQIIMAKQATGGPKPRGPKQQDEDDDGMA.

A disordered region spans residues 528-548 (ATGGPKPRGPKQQDEDDDGMA).

Belongs to the TCP-1 chaperonin family. Heterooligomeric complex.

It is found in the cytoplasm. Molecular chaperone; assists the folding of proteins upon ATP hydrolysis. Known to play a role, in vitro, in the folding of actin and tubulin. Required for correct subcellular localization of pgl-1. This chain is T-complex protein 1 subunit theta, found in Caenorhabditis briggsae.